The sequence spans 255 residues: Ribonuclease HII (255 aa).

The RNase H type-2 domain maps to 72-255 (AIICGIDEVG…KSFEPIKSLL (184 aa)). 3 residues coordinate a divalent metal cation: Asp78, Glu79, and Asp170.

The protein belongs to the RNase HII family. Requires Mn(2+) as cofactor. The cofactor is Mg(2+).

Its subcellular location is the cytoplasm. The catalysed reaction is Endonucleolytic cleavage to 5'-phosphomonoester.. Its function is as follows. Endonuclease that specifically degrades the RNA of RNA-DNA hybrids. The polypeptide is Ribonuclease HII (Staphylococcus aureus (strain USA300)).